A 1101-amino-acid chain; its full sequence is Coiled-coil domain-containing protein 150 (1101 aa).

Coiled-coil stretches lie at residues 106–299, 398–680, 712–940, and 970–1033; these read RLES…DLTS, AAHA…KEDN, DSEI…NYEQ, and VRNK…EAHR. Positions 1055 to 1071 are enriched in basic and acidic residues; the sequence is SGEDRWQEKDQDVKHDV. Positions 1055-1101 are disordered; it reads SGEDRWQEKDQDVKHDVMSNQSVLHRWERKQNLRPMPKKYHSEVQRK.

The chain is Coiled-coil domain-containing protein 150 (CCDC150) from Homo sapiens (Human).